A 149-amino-acid polypeptide reads, in one-letter code: Pleckstrin homology domain-containing family J member 1 (149 aa).

Residues 15–108 (PAEKAAEILM…WIEALKRASY (94 aa)) enclose the PH domain.

The sequence is that of Pleckstrin homology domain-containing family J member 1 (PLEKHJ1) from Gallus gallus (Chicken).